A 560-amino-acid polypeptide reads, in one-letter code: E3 SUMO-protein ligase CBX4 (560 aa).

Positions 1 to 75 (MELPAVGEHV…LMGYRKRGPK (75 aa)) are involved in interaction with H3C15 and H3C1. The tract at residues 1–539 (MELPAVGEHV…LSEFKPFFGN (539 aa)) is interaction with BMI1. A Chromo domain is found at 11-69 (FAVESIEKKRIRKGRVEYLVKWRGWSPKYNTWEPEENILDPRLLIAFQNRERQEQLMGY). Residues K77, K106, K114, and K125 each participate in a glycyl lysine isopeptide (Lys-Gly) (interchain with G-Cter in SUMO2) cross-link. Positions 92 to 152 (VLTGLQDSST…PPGKSGKYYY (61 aa)) are disordered. K149 bears the N6-acetyllysine; alternate mark. Residue K149 forms a Glycyl lysine isopeptide (Lys-Gly) (interchain with G-Cter in SUMO2); alternate linkage. Glycyl lysine isopeptide (Lys-Gly) (interchain with G-Cter in SUMO2) cross-links involve residues K157, K167, and K178. The residue at position 182 (S182) is a Phosphoserine. Glycyl lysine isopeptide (Lys-Gly) (interchain with G-Cter in SUMO2) cross-links involve residues K191, K205, K212, K223, K249, K268, K278, and K280. Positions 217-243 (AAGAPGKGSEKGPPNGMMPAPKEAVTG) are disordered. Basic and acidic residues-rich tracts occupy residues 281 to 291 (SGEVAEGEARS) and 298 to 331 (AADERHPPADRTFKKAAGAEEKKVEAPPKRREEE). Residues 281 to 404 (SGEVAEGEAR…HHHHHHAVGL (124 aa)) are disordered. Glycyl lysine isopeptide (Lys-Gly) (interchain with G-Cter in SUMO2) cross-links involve residues K320, K352, and K365. Residues 380–401 (PSHHPHPHPHHHHHHHHHHHHA) are compositionally biased toward basic residues. S467 is modified (phosphoserine). K494 is covalently cross-linked (Glycyl lysine isopeptide (Lys-Gly) (interchain with G-Cter in SUMO2); alternate). K494 is covalently cross-linked (Glycyl lysine isopeptide (Lys-Gly) (interchain with G-Cter in SUMO); alternate). Position 497 is a phosphothreonine; by HIPK2 (T497). The segment covering 509 to 521 (AAPTTTAEKPPAE) has biased composition (low complexity). The disordered stretch occupies residues 509–528 (AAPTTTAEKPPAEAQDEPAE). The involved in interaction with H3C15 and RNF2 stretch occupies residues 531 to 556 (SEFKPFFGNIIITDVTANCLTVTFKE). The interval 540–560 (IIITDVTANCLTVTFKEYVTV) is interaction with RNF2.

In terms of assembly, interacts with histone H3-K9Me3. Interacts with CHTOP. Component of a PRC1-like complex. The composition of the PRC1 complex differs between the PRC1 complex in pluripotent embryonic stem cells containing RNF2, CBX7 and PCGF2, and the PRC1 complex in differentiating cells containing RNF2, CBX2, CBX4 and BMI1. Self-associates. Interacts with SUV39H1 and HIPK2. Interacts with CSNK2B. May interact with H3C15, H3C1 and RNF2. Interacts with SUMO1P1/SUMO5. Interacts with PRDM1/Blimp-1. Ubiquitinated. Ubiquitination regulates the function of the Polycomb group (PcG) multiprotein PRC1-like complex. Deubiquitinated by USP26. In terms of processing, phosphorylated on Thr-497 by HIPK2 upon DNA damage. This phosphorylation stimulates E3 SUMO-protein ligase activity and promotes sumoylation on Lys-494, as well as sumoylation of other target proteins, such as HNRNPK. In terms of tissue distribution, ubiquitous.

The protein resides in the nucleus. It is found in the nucleus speckle. It functions in the pathway protein modification; protein sumoylation. In terms of biological role, E3 SUMO-protein ligase that catalyzes sumoylation of target proteins by promoting the transfer of SUMO from the E2 enzyme to the substrate. Involved in the sumoylation of HNRNPK, a p53/TP53 transcriptional coactivator, hence indirectly regulates p53/TP53 transcriptional activation resulting in p21/CDKN1A expression. Monosumoylates ZNF131. Component of a Polycomb group (PcG) multiprotein PRC1-like complex, a complex class required to maintain the transcriptionally repressive state of many genes, including Hox genes, throughout development. PcG PRC1 complex acts via chromatin remodeling and modification of histones; it mediates monoubiquitination of histone H2A 'Lys-119', rendering chromatin heritably changed in its expressibility. Binds to histone H3 trimethylated at 'Lys-9' (H3K9me3). Plays a role in the lineage differentiation of the germ layers in embryonic development. The chain is E3 SUMO-protein ligase CBX4 (CBX4) from Homo sapiens (Human).